Here is a 352-residue protein sequence, read N- to C-terminus: Maleylacetate reductase (352 aa).

NAD(+) is bound by residues 93-94 (GS) and 115-119 (TTYAG).

Belongs to the iron-containing alcohol dehydrogenase family. Requires The maleylacetate reductase family of enzymes does not require any metal ion for activity, despite being related to the family III metal-dependent polyol dehydrogenases. as cofactor.

The catalysed reaction is 3-oxoadipate + NAD(+) = maleylacetate + NADH + H(+). It functions in the pathway xenobiotic degradation; gamma-hexachlorocyclohexane degradation. Catalyzes the NADH-dependent reduction of maleylacetate to beta-ketoadipate, a step in the degradation of gamma-hexachlorocyclohexane (gamma-HCH or lindane). Has an essential role in this assimilation pathway that allows S.japonicum UT26 to grow on gamma-HCH as the sole source of carbon and energy. This Sphingobium indicum (strain DSM 16413 / CCM 7287 / MTCC 6362 / UT26 / NBRC 101211 / UT26S) (Sphingobium japonicum) protein is Maleylacetate reductase.